A 368-amino-acid polypeptide reads, in one-letter code: D-alanine--D-alanine ligase (368 aa).

Residues 141–350 (KMIWDYSGLP…YNELIMHLIE (210 aa)) form the ATP-grasp domain. 176 to 231 (EKDLEYPLFIKPCRAGSSVGAGMVKNRNELLEQAEESFLWDNKILVEACIEAREVE) is a binding site for ATP. Mg(2+)-binding residues include Asp-303, Glu-317, and Asn-319.

It belongs to the D-alanine--D-alanine ligase family. Mg(2+) is required as a cofactor. The cofactor is Mn(2+).

Its subcellular location is the cytoplasm. It catalyses the reaction 2 D-alanine + ATP = D-alanyl-D-alanine + ADP + phosphate + H(+). The protein operates within cell wall biogenesis; peptidoglycan biosynthesis. Cell wall formation. This Treponema denticola (strain ATCC 35405 / DSM 14222 / CIP 103919 / JCM 8153 / KCTC 15104) protein is D-alanine--D-alanine ligase.